A 149-amino-acid polypeptide reads, in one-letter code: Calmodulin-like protein (149 aa).

EF-hand domains follow at residues 6–41 (TTQALYKEAFNLFDKDKDGKITIQELGIVMRSVGSN), 42–76 (PTQQELKDIAKEIDDGSGLVDFSKFSSLMTRKMKY), 78–113 (DSEADIKQAFKVFDKKGNGYANIQDLKHTLTSIGEK), and 113–148 (KLTKEEFDNMLKDAKTVDGQIHVDEFVRVIKSSKSF). Residues Asp-19, Asp-21, Asp-23, Lys-25, and Glu-30 each contribute to the Ca(2+) site.

This sequence belongs to the calmodulin family.

Its subcellular location is the contractile vacuole. Its function is as follows. Mediates the control of a large number of enzymes, ion channels and other proteins by Ca(2+) ions. Among the enzymes to be stimulated by the calmodulin-Ca(2+) complex are a number of protein kinases and phosphatases. The sequence is that of Calmodulin-like protein (calB) from Dictyostelium discoideum (Social amoeba).